The following is a 230-amino-acid chain: Potassium/proton antiporter CemA (230 aa).

The next 4 helical transmembrane spans lie at 7 to 27, 106 to 126, 145 to 165, and 181 to 201; these read LPSL…SSSF, IILH…SFFL, LNDS…VGFH, and FGWA…PVIL.

The protein belongs to the CemA family.

It localises to the plastid. Its subcellular location is the chloroplast inner membrane. It carries out the reaction K(+)(in) + H(+)(out) = K(+)(out) + H(+)(in). Contributes to K(+)/H(+) antiport activity by supporting proton efflux to control proton extrusion and homeostasis in chloroplasts in a light-dependent manner to modulate photosynthesis. Prevents excessive induction of non-photochemical quenching (NPQ) under continuous-light conditions. Indirectly promotes efficient inorganic carbon uptake into chloroplasts. The protein is Potassium/proton antiporter CemA of Hordeum vulgare (Barley).